Here is a 338-residue protein sequence, read N- to C-terminus: Lipoate-protein ligase A (338 aa).

The BPL/LPL catalytic domain occupies 29–216; that stretch reads PATQRVLFLW…AFFAHYGERV (188 aa). Residues arginine 71, 76-79, and lysine 134 contribute to the ATP site; that span reads GAVF. Lysine 134 lines the (R)-lipoate pocket.

Belongs to the LplA family. As to quaternary structure, monomer.

Its subcellular location is the cytoplasm. The enzyme catalyses L-lysyl-[lipoyl-carrier protein] + (R)-lipoate + ATP = N(6)-[(R)-lipoyl]-L-lysyl-[lipoyl-carrier protein] + AMP + diphosphate + H(+). Its pathway is protein modification; protein lipoylation via exogenous pathway; protein N(6)-(lipoyl)lysine from lipoate: step 1/2. The protein operates within protein modification; protein lipoylation via exogenous pathway; protein N(6)-(lipoyl)lysine from lipoate: step 2/2. In terms of biological role, catalyzes both the ATP-dependent activation of exogenously supplied lipoate to lipoyl-AMP and the transfer of the activated lipoyl onto the lipoyl domains of lipoate-dependent enzymes. This Escherichia coli O6:H1 (strain CFT073 / ATCC 700928 / UPEC) protein is Lipoate-protein ligase A.